A 233-amino-acid chain; its full sequence is RNA/RNP complex-1-interacting phosphatase homolog (233 aa).

Residues 1-14 (MSNYHHNHNYQHRP) are compositionally biased toward basic residues. The disordered stretch occupies residues 1–21 (MSNYHHNHNYQHRPRGYERLP). Residues 34-206 (NVGRDIDGTR…LYEAERKKKY (173 aa)) form the Tyrosine-protein phosphatase domain. The active-site Phosphocysteine intermediate is the Cys-150. 151-156 (THGLNR) lines the substrate pocket. The Proton donor/acceptor role is filled by Arg-156. Residues 204 to 233 (KKYGKSSGKSSGNSADSTISSEQLHRNNSQ) are disordered. Low complexity predominate over residues 208-217 (KSSGKSSGNS). The span at 218 to 233 (ADSTISSEQLHRNNSQ) shows a compositional bias: polar residues.

Belongs to the protein-tyrosine phosphatase family. Non-receptor class dual specificity subfamily. In terms of assembly, interacts with the ERI/DICER complex component dcr-1. Interacts with ERI/DICER complex components rrf-3 and isoform b of eri-1. Interacts with drh-3 and rde-8.

Its subcellular location is the cytoplasm. It localises to the nucleus. Its function is as follows. RNA polyphosphatase which has RNA 5'-triphosphatase and diphosphatase activities. Displays poor protein-tyrosine phosphatase activity. Binds to 5'-triphosphorylated RNAs (also called ppp-RNAs). Dephosphorylates ppp-RNAs converting them to 5'-monophosphorylated RNAs (also called p-RNAs). During small-RNA-mediated gene-silencing or RNA interference (RNAi), involved in the dcr-1-mediated processing of an amplified dsRNA intermediate. This is most likely in association with several components of the ERI/DICER complex including dcr-1, eri-1 and rrf-3. Plays a role in the biogenesis of 26G small interfering RNAs (26G-siRNAs), which are a class of 26 nucleotide siRNAs that possess a guanine residue at the 5'-end, by dephosphorylating 5'-triphosphorylated 26G-siRNAs prior to their maturation by the ERI/DICER complex. Plays a role in the biogenesis of csr-1-bound 22G small interfering RNAs (22G-siRNAs), which are a class of 22 nucleotide siRNAs that possess a guanine residue at the 5'-end. Not required for the biogenesis of microRNAs (miRNA) or for the biogenesis of a class of 21 nucleotide PIWI-interacting RNAs (piRNAs) that possess a uracil residue at the 5'-end (also called 21U-RNAs). This is RNA/RNP complex-1-interacting phosphatase homolog from Caenorhabditis elegans.